A 146-amino-acid chain; its full sequence is Leghemoglobin alpha (146 aa).

Residues 3 to 146 (AFTEKQEALV…LAAAIKKAYA (144 aa)) form the Globin domain. Nitrated tyrosine is present on residues Tyr-26 and Tyr-31. A heme b-binding site is contributed by Ser-46. Ser-46 carries the phosphoserine modification. Position 62 (His-62) interacts with O2. Residues His-93 and Lys-96 each contribute to the heme b site. Residue Tyr-134 is modified to Nitrated tyrosine.

The protein belongs to the plant globin family. As to quaternary structure, monomer. In terms of processing, nitrated mainly at Tyr-31 and, to a lower extent, at Tyr-26 and Tyr-134, in effective nodules and particularly in hypoxic conditions; this mechanism may play a protective role in the symbiosis by buffering toxic peroxynitrite NO(2)(-). Nitration level decrease during nodule senescence. Phosphorylation at Ser-46 disrupts the molecular environment of its porphyrin ring oxygen binding pocket, thus leading to a reduced oxygen consumption and to the delivery of oxygen O(2) to symbiosomes. In terms of tissue distribution, root nodules.

The protein localises to the cytoplasm. Its subcellular location is the cytosol. It is found in the nucleus. In terms of biological role, leghemoglobin that reversibly binds oxygen O(2) through a pentacoordinated heme iron. In root nodules, facilitates the diffusion of oxygen to the bacteroids while preventing the bacterial nitrogenase from being inactivated by buffering dioxygen, nitric oxide and carbon monoxide, and promoting the formation of reactive oxygen species (ROS, e.g. H(2)O(2)). This role is essential for symbiotic nitrogen fixation (SNF). The polypeptide is Leghemoglobin alpha (Phaseolus vulgaris (Kidney bean)).